The chain runs to 448 residues: Probable D-serine dehydratase (448 aa).

Lys119 carries the N6-(pyridoxal phosphate)lysine modification.

It belongs to the serine/threonine dehydratase family. DsdA subfamily. It depends on pyridoxal 5'-phosphate as a cofactor.

The enzyme catalyses D-serine = pyruvate + NH4(+). The chain is Probable D-serine dehydratase from Pseudomonas paraeruginosa (strain DSM 24068 / PA7) (Pseudomonas aeruginosa (strain PA7)).